The sequence spans 517 residues: Protein MGF 505-2R (517 aa).

This sequence belongs to the asfivirus MGF 505 family.

Functionally, plays a role in virus cell tropism, and may be required for efficient virus replication in macrophages. This is Protein MGF 505-2R from Ornithodoros (relapsing fever ticks).